The primary structure comprises 233 residues: Large ribosomal subunit protein uL1 (233 aa).

The protein belongs to the universal ribosomal protein uL1 family. Part of the 50S ribosomal subunit.

Functionally, binds directly to 23S rRNA. The L1 stalk is quite mobile in the ribosome, and is involved in E site tRNA release. Protein L1 is also a translational repressor protein, it controls the translation of the L11 operon by binding to its mRNA. This Geobacillus kaustophilus (strain HTA426) protein is Large ribosomal subunit protein uL1.